Consider the following 538-residue polypeptide: 2-isopropylmalate synthase (538 aa).

The Pyruvate carboxyltransferase domain occupies 6–277 (LIIFDTTLRD…DSTVPLSTID (272 aa)). Asp-15, His-206, His-208, and Asn-242 together coordinate Mn(2+). Positions 406-538 (RLEQVQVSCG…AHPDAAAQKL (133 aa)) are regulatory domain.

The protein belongs to the alpha-IPM synthase/homocitrate synthase family. LeuA type 1 subfamily. In terms of assembly, homodimer. The cofactor is Mn(2+).

The protein localises to the cytoplasm. It carries out the reaction 3-methyl-2-oxobutanoate + acetyl-CoA + H2O = (2S)-2-isopropylmalate + CoA + H(+). It functions in the pathway amino-acid biosynthesis; L-leucine biosynthesis; L-leucine from 3-methyl-2-oxobutanoate: step 1/4. Functionally, catalyzes the condensation of the acetyl group of acetyl-CoA with 3-methyl-2-oxobutanoate (2-ketoisovalerate) to form 3-carboxy-3-hydroxy-4-methylpentanoate (2-isopropylmalate). The polypeptide is 2-isopropylmalate synthase (Gloeobacter violaceus (strain ATCC 29082 / PCC 7421)).